A 1386-amino-acid chain; its full sequence is Pleckstrin homology domain-containing family G member 2 (1386 aa).

Disordered stretches follow at residues 1–21 (MPEG…GCGR) and 36–82 (TAPA…PLPG). Low complexity-rich tracts occupy residues 8–17 (LSLSKPSPSL) and 45–62 (SPRG…GSEG). A Phosphoserine modification is found at S90. The DH domain occupies 102 to 283 (RLERVAREIV…TAVAWYINDM (182 aa)). Residues 313–411 (ELVLEGAFRG…WIHCLQRLFF (99 aa)) form the PH domain. Disordered regions lie at residues 436 to 540 (KSKP…PSGT), 554 to 612 (GLRD…PSPL), 701 to 739 (EPAE…EEGV), 790 to 815 (ILED…RTAS), and 829 to 859 (QQMQ…SPCL). At T445 the chain carries Phosphothreonine. 2 positions are modified to phosphoserine: S450 and S469. The span at 592 to 603 (SEEEEEEEEGLE) shows a compositional bias: acidic residues. Phosphoserine is present on residues S911 and S1049. Disordered regions lie at residues 1037 to 1099 (PVPK…PLPC) and 1162 to 1191 (TSPK…DTQV). Composition is skewed to polar residues over residues 1048–1059 (ESPTNIPLTKQG) and 1073–1086 (QPIQ…SSLD). T1257 carries the phosphothreonine modification. A phosphoserine mark is found at S1261 and S1310. Disordered stretches follow at residues 1291-1333 (ARRQ…ARRL) and 1367-1386 (TQES…PFHM). Positions 1301–1317 (PAASRGSWSSAPTSRAS) are enriched in low complexity. A compositionally biased stretch (pro residues) spans 1318–1330 (SPPPQPQPPPPPA).

May be a transforming oncogene with exchange activity for CDC42. May be a guanine-nucleotide exchange factor (GEF) for RAC1 and CDC42. Activated by the binding to subunits beta and gamma of the heterotrimeric guanine nucleotide-binding protein (G protein). Involved in the regulation of actin polymerization. In Homo sapiens (Human), this protein is Pleckstrin homology domain-containing family G member 2 (PLEKHG2).